The following is a 183-amino-acid chain: Inner membrane-spanning protein YciB (183 aa).

A run of 5 helical transmembrane segments spans residues 22–42, 50–70, 72–92, 118–138, and 148–168; these read IYAATGVLIAATAIQLVITYL, MHLATFAMVTVFGSLTLFFHD, AFIKWKVSIVYALFAIGLIAS, VTWYWVGFFVLCSFANIYIAF, and FKVFGLTALTLINTVITVVYL.

Belongs to the YciB family.

It localises to the cell inner membrane. In terms of biological role, plays a role in cell envelope biogenesis, maintenance of cell envelope integrity and membrane homeostasis. The polypeptide is Inner membrane-spanning protein YciB (Shewanella frigidimarina (strain NCIMB 400)).